The following is an 817-amino-acid chain: Verprolin (817 aa).

The segment covering 1-15 (MAGAPAPPPPPPPPA) has biased composition (pro residues). Positions 1–752 (MAGAPAPPPP…THTNQPDVDV (752 aa)) are disordered. The 18-residue stretch at 30–47 (GRDALLGDIRKGMKLKKA) folds into the WH2 1 domain. The segment covering 37–51 (DIRKGMKLKKAETND) has biased composition (basic and acidic residues). A compositionally biased stretch (low complexity) spans 62 to 79 (VSSASGSSGTVSSKGPSM). Positions 87–106 (MGAPQLGDILAGGIPKLKHI) constitute a WH2 2 domain. Asn109 carries N-linked (GlcNAc...) asparagine glycosylation. Over residues 119–180 (SAPPIPGAVP…VPSSPAPPLP (62 aa)) the composition is skewed to pro residues. Residue Asn212 is glycosylated (N-linked (GlcNAc...) asparagine). Over residues 236–245 (PQAPPPPPTP) the composition is skewed to pro residues. Positions 254 to 265 (IKPTDNAVSPPS) are enriched in polar residues. Pro residues predominate over residues 306-335 (SQPPLPSSAPPIPTSHAPPLPPTAPPPPSL). The span at 336–348 (PNVTSAPKKATSA) shows a compositional bias: low complexity. An N-linked (GlcNAc...) asparagine glycan is attached at Asn337. A compositionally biased stretch (pro residues) spans 372 to 382 (PVPPTLAPPLP). Asn383 is a glycosylation site (N-linked (GlcNAc...) asparagine). Low complexity predominate over residues 383-395 (NTTSVPPNKASSM). Pro residues predominate over residues 396 to 407 (PAPPPPPPPPPG). The segment covering 408–422 (AFSTSSALSASSIPL) has biased composition (low complexity). The segment covering 423–432 (APLPPPPPPS) has biased composition (pro residues). Low complexity predominate over residues 447-469 (LTTNKPSASSKQSKISSSSSSSA). Positions 502–516 (DKQEDVIGSSKDDNV) are enriched in basic and acidic residues. Residues 518–534 (PSPISPSINPPKQSSQN) are compositionally biased toward low complexity. Residue Ser519 is modified to Phosphoserine. A compositionally biased stretch (pro residues) spans 557 to 579 (APPPHTDAMAPPLPPSAPPPPIT). Positions 588–597 (GDDHTNDKSE) are enriched in basic and acidic residues. Positions 649–661 (PPSPPVAAAPPLP) are enriched in pro residues. Polar residues predominate over residues 713-737 (MDTGTSNSPSKNLKQRLFSTGGSTL). Ser762 is modified (phosphoserine). N-linked (GlcNAc...) asparagine glycosylation is found at Asn784 and Asn796. Residues 786–806 (SQMPKPRPFQNKTKLYPSGKG) are disordered.

This sequence belongs to the verprolin family. Post-translationally, N-glycosylated.

The protein resides in the cytoplasm. The protein localises to the cytoskeleton. Functionally, involved in cytoskeletal organization and cellular growth. May exert its effects on the cytoskeleton directly, or indirectly via proline-binding proteins (e.g. profilin) or proteins possessing SH3 domains. This Saccharomyces cerevisiae (strain ATCC 204508 / S288c) (Baker's yeast) protein is Verprolin (VRP1).